The primary structure comprises 1146 residues: MFNIKKRKESITGIPPINVNSPQSVPLSGTLQSPLITPNSPNFVSRQCPFKKFGCSSFLVSKAEFDNHLKDDAQFHLQLAVEKFDHQFDLHTQLMAHFTEQMEDQLEKTMKVVRNHTDSLGGNVQTKLDEGIEKCMAFAKKVEQQQQQLAKRLITQQIQEKKSTSSPLVKGGISGGGGSGGDDSFDGANISSMSTSKQELQQELQSLSIKMKKELTELSDELSQKLERSTGNIDIKIKRIEGEVNEKIDKRQLVSTIDDSIGKKTDSIGYTLESSIIKKVEEKEKKKSEQNQLLFDSKIESLKDKIKIIETQQLDTSSEVRKLKLESTSSGNLMAGLNGTSGRPSSSSHFIPSSVSAAANNINKNEIMEEVKKVEEKLQKKIREEIDNTKSELSKVERSVKDNRSEIEGLEKDCKNQFDKQDNKIKQVEDDLKKSDSLLLLMQNNLKKYNEFVDRERDRESERLKLQDSIKRLEQNQKKIEAEIQEGNEQVERVLREEASISPISSVPKSPITTKRSSIILNSPPMTSQQSSPKIQDLLSSSGSSSVSGINISSETGEMGILWEFDPIINKWIRLSMKLKVERKPFAEGALREAYHTVSLGVGTDENYPLGTTTKLFPPIEMISPISKNNEAMTQLKNGTKFVLKLYKKEAEQQASRELYFEDVKMQMVCRDWGNKFNQKKPPKKIEFLMSWVVELIDRSPSSNGQPILCSIEPLLVGEFKKNNSNYGAVLTNRSTPQAFSHFTYELSNKQMIVVDIQGVDDLYTDPQIHTPDGKGFGLGNLGKAGINKFITTHKCNAVCALLDLDVKLGGVLSGNNKKQLQQGTMVMPDILPELMPSDNTIKVGAKQLPKAEFSKKDLKCVSTIQSFRERVNSIAFFDNQKLLCAGYGDGTYRVFDVNDNWKCLYTVNGHRKSIESIACNSNYIFTSSPDNTIKVHIIRSGNTKCIETLVGHTGEVNCVVANEKYLFSCSYDKTIKVWDLSTFKEIKSFEGVHTKYIKTLALSGRYLFSGGNDQIIYVWDTETLSMLFNMQGHEDWVLSLHCTASYLFSTSKDNVIKIWDLSNFSCIDTLKGHWNSVSSCVVKDRYLYSGSEDNSIKVWDLDTLECVYTIPKSHSLGVKCLMVFNNQIISAAFDGSIKVWEWQSK.

The segment at 1–25 (MFNIKKRKESITGIPPINVNSPQSV) is disordered. The stretch at 100–120 (EQMEDQLEKTMKVVRNHTDSL) forms a coiled coil. The disordered stretch occupies residues 158–191 (IQEKKSTSSPLVKGGISGGGGSGGDDSFDGANIS). The segment covering 172-181 (GISGGGGSGG) has biased composition (gly residues). 2 coiled-coil regions span residues 187-241 (GANI…KRIE) and 297-502 (SKIE…ASIS). The segment at 500-551 (SISPISSVPKSPITTKRSSIILNSPPMTSQQSSPKIQDLLSSSGSSSVSGIN) is pseudosubstrate/autoinhibitory domain. A compositionally biased stretch (polar residues) spans 521-534 (LNSPPMTSQQSSPK). The interval 521-540 (LNSPPMTSQQSSPKIQDLLS) is disordered. Residues 552 to 852 (ISSETGEMGI…KVGAKQLPKA (301 aa)) are catalytic. Residues 564 to 808 (EFDPIINKWI…VCALLDLDVK (245 aa)) form the Alpha-type protein kinase domain. 778-783 (GLGNLG) contributes to the ATP binding site. WD repeat units follow at residues 867-897 (SFRE…RVFD), 910-938 (GHRK…KVHI), 952-980 (GHTG…KVWD), 993-1021 (VHTK…YVWD), 1033-1061 (GHED…KIWD), 1073-1101 (GHWN…KVWD), and 1114-1142 (SHSL…KVWE).

This sequence belongs to the protein kinase superfamily. Alpha-type protein kinase family. ALPK subfamily. As to quaternary structure, oligomer. Mg(2+) serves as cofactor. Requires Mn(2+) as cofactor. The N-terminus is blocked.

The enzyme catalyses L-threonyl-[myosin heavy-chain] + ATP = O-phospho-L-threonyl-[myosin heavy-chain] + ADP + H(+). Catalyzes its autophosphorylation, which is needed for enzymatic activity and phosphorylates myosin II heavy chain at a threonine in the C-terminal tail region. This phosphorylation is critical for regulating the assembly and disassembly of myosin II filament, affecting myosin localization during an array of cellular contractile events, including cytokinesis and capping of cell surface receptors as well as chemotactic cell locomotion. This chain is Myosin heavy chain kinase A (mhkA), found in Dictyostelium discoideum (Social amoeba).